The primary structure comprises 279 residues: High choriolytic enzyme 2 (279 aa).

A signal peptide spans 1-20; that stretch reads MNLASSACLLLLFLLGIAQA. A propeptide spans 21 to 79 (activation peptide); it reads LPVQNEEGHEEGNKEGHGEEGVEEGDEDDFVDFTTRILTSNNNTDQLLLEGDLVAPTNR. Residues 26–40 are compositionally biased toward basic and acidic residues; sequence EEGHEEGNKEGHGEE. Residues 26–46 are disordered; the sequence is EEGHEEGNKEGHGEEGVEEGD. N62 carries N-linked (GlcNAc...) asparagine glycosylation. The 200-residue stretch at 80–279 folds into the Peptidase M12A domain; that stretch reads NAMKCWYNSC…TRSNVLYNCR (200 aa). 3 cysteine pairs are disulfide-bonded: C84-C89, C129-C278, and C150-C170. H178 serves as a coordination point for Zn(2+). E179 is an active-site residue. 2 residues coordinate Zn(2+): H182 and H188.

It depends on Zn(2+) as a cofactor.

Its subcellular location is the zymogen granule. The enzyme catalyses Hydrolysis of the inner layer of fish egg envelope. Also hydrolysis of casein and small molecule substrates such as succinyl-Leu-Leu-Val-Tyr-|-7-(4-methyl)coumarylamide.. In terms of biological role, participates in the breakdown of the egg envelope, which is derived from the egg extracellular matrix, at the time of hatching. Thus allowing the newly hatched fish to swim free. HCE binds tightly to the egg envelope while it exerts the choriolytic swelling action. This Oryzias latipes (Japanese rice fish) protein is High choriolytic enzyme 2 (hceb).